Consider the following 57-residue polypeptide: UPF0434 protein swp_2279 (57 aa).

This sequence belongs to the UPF0434 family.

This chain is UPF0434 protein swp_2279, found in Shewanella piezotolerans (strain WP3 / JCM 13877).